Here is a 496-residue protein sequence, read N- to C-terminus: MNEFHQFEPYTLTSFDHAFPPAFYHFVALSFAIQKPQDAIPTLESAILRMVGELPFLTGEVGPCPDAKKNGVMRVQPSLNTTDKSSIVRVKEHPRFVLSSTPTPGKGTGTGQHHARCVDLSGAIVPEFDYSSISAPVFRAQINVLADGIVLCLAINHMVIDGTGTGALVDILATVCREGEGSVNYLRTCGAIQESTRRDLQDIGTQGQLPDGVQSSDDPTDGAGDIFEPGKSYANHTLVFSDAHVKALKGRCNAILAEMFPAASTGPPNPGTTVRDQRSLVSSNDVLTALLWMSISQVRSDPTQPREQSSVSVPVNTRTRFSPSLPDNYLGNAVLVTESKLALSELQCLNDDGHLGETSTQGIRLLSLLAHRVRSSIAAVDDESLRVSLRRAHHASDWETLLARPGDVVVSSLRSWNSFGLDFGPTLGGIAALELVPTFAIEGECIIKPCRCDSSGSGIWEVMVTLKPEHMHALRENQLMRCVLQCDYPVEVYRAG.

A compositionally biased stretch (polar residues) spans 203–217 (IGTQGQLPDGVQSSD). The disordered stretch occupies residues 203–228 (IGTQGQLPDGVQSSDDPTDGAGDIFE).

It belongs to the fumigaclavine B O-acetyltransferase family.

It carries out the reaction campesine A + acetyl-CoA = campesine C + CoA. Its pathway is alkaloid biosynthesis. Its function is as follows. O-acetyltransferase; part of the gene cluster that mediates the biosynthesis of campesine G, a dimeric indole piperazine alkaloid that shows good insecticidal activity Galleria mellonella. Within the pathway, cpsE acetylates N13 of campesine A to produce campesine C. CpsE produces an inseparable mixture of two acyl-atropisomers due to the spontaneous rotation of an acyl group at N13 of piperazine ring. The non-canonical non-ribosomal peptide synthetase cpsA catalyzes the first steps of the pathway by producing L-tryptophanal and L-valinal from their respective amino-acids. These products condensate spontaneously to form trypyl-valyl pyrazine also known as didehydrocampesine A. The NmrA-like family domain-containing oxidoreductase cpsB is the next enzyme in cps pathway and reduces the unstable didehydrocampesine A to campesine A. The methyltransferase cpsF and the acetyltransferase cpsE both recognize N13 of piperazine ring to carry out methylation and acetylation of campesine A to produce campesine C and B, respectively. The cytochrome P450 monooxygenase cpsD then acts as a dimerase that catalyzes oxidative heterocoupling between campesine B and C to produce heterodimers with unexpected 6/5/6/6/6/6/5/6 eight-ring scaffold called campesine D. Finally,the cytochrome P450 monooxygenase cpsC is a regioselective dehydrogenase that catalyzes dehydrogenation reaction towards C2-N1 to produce campesine G. The polypeptide is O-acetyltransferase cpsE (Aspergillus campestris (strain IBT 28561)).